Here is a 430-residue protein sequence, read N- to C-terminus: Serine--tRNA ligase (430 aa).

Residue 235–237 coordinates L-serine; that stretch reads TAE. ATP-binding positions include 266 to 268 and Val282; that span reads RRE. L-serine is bound at residue Glu289. Position 353 to 356 (353 to 356) interacts with ATP; that stretch reads EASS. Ser389 serves as a coordination point for L-serine.

This sequence belongs to the class-II aminoacyl-tRNA synthetase family. Type-1 seryl-tRNA synthetase subfamily. Homodimer. The tRNA molecule binds across the dimer.

It localises to the cytoplasm. The enzyme catalyses tRNA(Ser) + L-serine + ATP = L-seryl-tRNA(Ser) + AMP + diphosphate + H(+). It carries out the reaction tRNA(Sec) + L-serine + ATP = L-seryl-tRNA(Sec) + AMP + diphosphate + H(+). It functions in the pathway aminoacyl-tRNA biosynthesis; selenocysteinyl-tRNA(Sec) biosynthesis; L-seryl-tRNA(Sec) from L-serine and tRNA(Sec): step 1/1. Functionally, catalyzes the attachment of serine to tRNA(Ser). Is also able to aminoacylate tRNA(Sec) with serine, to form the misacylated tRNA L-seryl-tRNA(Sec), which will be further converted into selenocysteinyl-tRNA(Sec). In Chlorobium luteolum (strain DSM 273 / BCRC 81028 / 2530) (Pelodictyon luteolum), this protein is Serine--tRNA ligase.